The sequence spans 236 residues: tRNA1(Val) (adenine(37)-N6)-methyltransferase (236 aa).

It belongs to the methyltransferase superfamily. tRNA (adenine-N(6)-)-methyltransferase family.

The protein localises to the cytoplasm. The catalysed reaction is adenosine(37) in tRNA1(Val) + S-adenosyl-L-methionine = N(6)-methyladenosine(37) in tRNA1(Val) + S-adenosyl-L-homocysteine + H(+). Specifically methylates the adenine in position 37 of tRNA(1)(Val) (anticodon cmo5UAC). This chain is tRNA1(Val) (adenine(37)-N6)-methyltransferase, found in Aeromonas hydrophila subsp. hydrophila (strain ATCC 7966 / DSM 30187 / BCRC 13018 / CCUG 14551 / JCM 1027 / KCTC 2358 / NCIMB 9240 / NCTC 8049).